The chain runs to 430 residues: Histidinol dehydrogenase (430 aa).

Residues Tyr-129, Gln-190, and Asn-213 each contribute to the NAD(+) site. 3 residues coordinate substrate: Ser-236, Gln-258, and His-261. Zn(2+) is bound by residues Gln-258 and His-261. Active-site proton acceptor residues include Glu-326 and His-327. The substrate site is built by His-327, Asp-360, Glu-414, and His-419. Position 360 (Asp-360) interacts with Zn(2+). His-419 contacts Zn(2+).

This sequence belongs to the histidinol dehydrogenase family. It depends on Zn(2+) as a cofactor.

It catalyses the reaction L-histidinol + 2 NAD(+) + H2O = L-histidine + 2 NADH + 3 H(+). The protein operates within amino-acid biosynthesis; L-histidine biosynthesis; L-histidine from 5-phospho-alpha-D-ribose 1-diphosphate: step 9/9. Functionally, catalyzes the sequential NAD-dependent oxidations of L-histidinol to L-histidinaldehyde and then to L-histidine. This is Histidinol dehydrogenase from Caldanaerobacter subterraneus subsp. tengcongensis (strain DSM 15242 / JCM 11007 / NBRC 100824 / MB4) (Thermoanaerobacter tengcongensis).